A 402-amino-acid polypeptide reads, in one-letter code: Choline dehydrogenase (402 aa).

This sequence belongs to the iron-containing alcohol dehydrogenase family.

It catalyses the reaction choline + NAD(+) = betaine aldehyde + NADH + H(+). The protein operates within amine and polyamine biosynthesis; betaine biosynthesis via choline pathway; betaine aldehyde from choline (dehydrogenase route): step 1/1. Functionally, involved in the biosynthesis of the osmoprotectant glycine betaine from choline. This Bacillus subtilis (strain 168) protein is Choline dehydrogenase.